We begin with the raw amino-acid sequence, 155 residues long: Small ribosomal subunit protein uS7c (155 aa).

The protein belongs to the universal ribosomal protein uS7 family. In terms of assembly, part of the 30S ribosomal subunit.

It is found in the plastid. The protein resides in the chloroplast. Functionally, one of the primary rRNA binding proteins, it binds directly to 16S rRNA where it nucleates assembly of the head domain of the 30S subunit. In Allium textile (Textile onion), this protein is Small ribosomal subunit protein uS7c (rps7).